Consider the following 394-residue polypeptide: Elongation factor Tu 2 (394 aa).

The 195-residue stretch at 10–204 (KPHVNVGTIG…ALDSYIPEPE (195 aa)) folds into the tr-type G domain. The tract at residues 19-26 (GHVDHGKT) is G1. 19 to 26 (GHVDHGKT) is a binding site for GTP. Mg(2+) is bound at residue T26. Positions 60–64 (GITIN) are G2. Residues 81–84 (DCPG) form a G3 region. GTP is bound by residues 81 to 85 (DCPGH) and 136 to 139 (NKCD). Residues 136-139 (NKCD) are G4. The interval 174–176 (SAL) is G5.

The protein belongs to the TRAFAC class translation factor GTPase superfamily. Classic translation factor GTPase family. EF-Tu/EF-1A subfamily. In terms of assembly, monomer.

The protein localises to the cytoplasm. It catalyses the reaction GTP + H2O = GDP + phosphate + H(+). GTP hydrolase that promotes the GTP-dependent binding of aminoacyl-tRNA to the A-site of ribosomes during protein biosynthesis. The chain is Elongation factor Tu 2 from Shewanella sp. (strain MR-4).